The sequence spans 233 residues: MTEVTYQIQDQIKQFNNFNPIQKTNYKYQYNSDNENSSLVYLIKNPKQNNFKNYNNKICNYKRSLSSSSFQGNEEKETRKKNKAQFYENDFENGFGNISSWLNNSIPYKCEDCNGNNEPPHQKLKSQDIPLFTFFEPLTFIHEINKVIHIELEIAGVDKDDVKVDLTNNILTIVAKKKSVYPLFQNMCEFKRHEKSIGVYKRVLEFNSNTVDKDTIKARYVNGILLITVNKFL.

The sHSP domain occupies 129–233; it reads IPLFTFFEPL…ILLITVNKFL (105 aa).

The protein belongs to the small heat shock protein (HSP20) family.

This is Small heat shock protein hspF (hspF-1) from Dictyostelium discoideum (Social amoeba).